Reading from the N-terminus, the 483-residue chain is Glutamyl-tRNA(Gln) amidotransferase subunit A (483 aa).

Residues Lys-76 and Ser-151 each act as charge relay system in the active site. The active-site Acyl-ester intermediate is Ser-175.

Belongs to the amidase family. GatA subfamily. In terms of assembly, heterotrimer of A, B and C subunits.

The enzyme catalyses L-glutamyl-tRNA(Gln) + L-glutamine + ATP + H2O = L-glutaminyl-tRNA(Gln) + L-glutamate + ADP + phosphate + H(+). Its function is as follows. Allows the formation of correctly charged Gln-tRNA(Gln) through the transamidation of misacylated Glu-tRNA(Gln) in organisms which lack glutaminyl-tRNA synthetase. The reaction takes place in the presence of glutamine and ATP through an activated gamma-phospho-Glu-tRNA(Gln). The chain is Glutamyl-tRNA(Gln) amidotransferase subunit A from Pseudomonas fluorescens (strain Pf0-1).